The sequence spans 278 residues: HTH-type transcriptional activator RhaS (278 aa).

The 99-residue stretch at 174-272 folds into the HTH araC/xylS-type domain; it reads NLLLAWLEDH…NWSPRDIRQG (99 aa). 2 DNA-binding regions (H-T-H motif) span residues 191-212 and 239-262; these read DAVADQFSLSLRTLHRQLKQQT and VTDIAYRCGFSDSNHFSTLFRREF.

Binds DNA as a dimer.

Its subcellular location is the cytoplasm. Its function is as follows. Activates expression of the rhaBAD and rhaT operons. In Shigella flexneri serotype 5b (strain 8401), this protein is HTH-type transcriptional activator RhaS.